Here is a 30-residue protein sequence, read N- to C-terminus: Phospholemman-like protein (30 aa).

This sequence belongs to the FXYD family. Phosphorylated by protein kinase a (PK-A) and protein kinase C (PK-C). Phosphorylated in response to insulin and adrenergic stimulation.

It localises to the microsome membrane. The protein localises to the endoplasmic reticulum membrane. Its function is as follows. Induces a hyperpolarization-activated chloride current when expressed in Xenopus oocytes. May have a functional role in muscle contraction. This is Phospholemman-like protein from Squalus acanthias (Spiny dogfish).